A 72-amino-acid polypeptide reads, in one-letter code: Translation initiation factor IF-1 (72 aa).

The S1-like domain maps to 1–72; the sequence is MAKEDAIELQ…SKGRIVFRAR (72 aa).

This sequence belongs to the IF-1 family. In terms of assembly, component of the 30S ribosomal translation pre-initiation complex which assembles on the 30S ribosome in the order IF-2 and IF-3, IF-1 and N-formylmethionyl-tRNA(fMet); mRNA recruitment can occur at any time during PIC assembly.

The protein resides in the cytoplasm. Functionally, one of the essential components for the initiation of protein synthesis. Stabilizes the binding of IF-2 and IF-3 on the 30S subunit to which N-formylmethionyl-tRNA(fMet) subsequently binds. Helps modulate mRNA selection, yielding the 30S pre-initiation complex (PIC). Upon addition of the 50S ribosomal subunit IF-1, IF-2 and IF-3 are released leaving the mature 70S translation initiation complex. The polypeptide is Translation initiation factor IF-1 (Aliivibrio fischeri (strain ATCC 700601 / ES114) (Vibrio fischeri)).